Reading from the N-terminus, the 472-residue chain is MSVVHQLSAGWLLDHLSFINKINYQLHQHHEPCCRKKEFTTSVHFESLQMDSVSSSGVCAAFIASDSSTKPENDDGGNYEMFTRKFVFRPELFDVTKPYITPAVHKECQQSNEKEDLMNGVKKEISISIIGKKRKRCVVFNQGELDAMEYHTKIRELILDGSLQLIQEGLKSGFLYPLFEKQDKGSKPITLPLDACSLSELCEMAKHLPSLNEMEHQTLQLVEEDTSVTEQDLFLRVVENNSSFTKVITLMGQKYLLPPKSSFLLSDISCMQPLLNYRKTFDVIVIDPPWQNKSVKRSNRYSYLSPLQIQQIPIPKLAAPNCLLVTWVTNRQKHLRFIKEELYPSWSVEVVAEWHWVKITNSGEFVFPLDSPHKKPYEGLILGRVQEKTALPLRNADVNVLPIPDHKLIVSVPCTLHSHKPPLAEVLKDYIKPDGEYLELFARNLQPGWTSWGNEVLKFQHVDYFIAVESGS.

This sequence belongs to the MT-A70-like family.

The protein localises to the nucleus. Its subcellular location is the cytoplasm. The protein resides in the cytosol. It is found in the mitochondrion matrix. It catalyses the reaction a 2'-O-methyladenosine in U2 snRNA + S-adenosyl-L-methionine = an N(6)-methyl-2'-O-methyladenosine in U2 snRNA + S-adenosyl-L-homocysteine + H(+). The catalysed reaction is a 2'-deoxyadenosine in DNA + S-adenosyl-L-methionine = an N(6)-methyl-2'-deoxyadenosine in DNA + S-adenosyl-L-homocysteine + H(+). Functionally, n(6)-adenine-specific methyltransferase that can methylate both RNAs and DNA. Acts as a N(6)-adenine-specific RNA methyltransferase by catalyzing formation of N6,2'-O-dimethyladenosine (m6A(m)) on internal positions of U2 small nuclear RNA (snRNA): methylates the 6th position of adenine residues with a pre-deposited 2'-O-methylation. Internal m6A(m) methylation of snRNAs regulates RNA splicing. Also able to act as a N(6)-adenine-specific DNA methyltransferase by mediating methylation of DNA on the 6th position of adenine (N(6)-methyladenosine). The existence of N(6)-methyladenosine (m6A) on DNA is however unclear in mammals, and additional evidences are required to confirm the role of the N(6)-adenine-specific DNA methyltransferase activity of METTL4 in vivo. Acts as a regulator of mitochondrial transcript levels and mitochondrial DNA (mtDNA) copy number by mediating mtDNA N(6)-methylation: m6A on mtDNA reduces transcription by repressing TFAM DNA-binding and bending. N(6)-methyladenosine deposition by METTL4 regulates Polycomb silencing by triggering ubiquitination and degradation of sensor proteins ASXL1 and MPND, leading to inactivation of the PR-DUB complex and subsequent preservation of Polycomb silencing. This is N(6)-adenine-specific methyltransferase METTL4 from Homo sapiens (Human).